The sequence spans 101 residues: NAD(P)H-quinone oxidoreductase subunit 4L, chloroplastic (101 aa).

Transmembrane regions (helical) follow at residues 2 to 22 (MFEH…YGLI), 32 to 52 (ICLE…SDLF), and 61 to 81 (IFAI…LSIL).

This sequence belongs to the complex I subunit 4L family. In terms of assembly, NDH is composed of at least 16 different subunits, 5 of which are encoded in the nucleus.

It localises to the plastid. The protein resides in the chloroplast thylakoid membrane. It catalyses the reaction a plastoquinone + NADH + (n+1) H(+)(in) = a plastoquinol + NAD(+) + n H(+)(out). The catalysed reaction is a plastoquinone + NADPH + (n+1) H(+)(in) = a plastoquinol + NADP(+) + n H(+)(out). NDH shuttles electrons from NAD(P)H:plastoquinone, via FMN and iron-sulfur (Fe-S) centers, to quinones in the photosynthetic chain and possibly in a chloroplast respiratory chain. The immediate electron acceptor for the enzyme in this species is believed to be plastoquinone. Couples the redox reaction to proton translocation, and thus conserves the redox energy in a proton gradient. The sequence is that of NAD(P)H-quinone oxidoreductase subunit 4L, chloroplastic from Agrostis stolonifera (Creeping bentgrass).